The primary structure comprises 269 residues: MTIDRYRRFARLAFIATLPLAGLATAAAAQEGANGKSFKDDFDTLDTRVWFVSDGWNNGGHQNCTWSKKQVKTVDGILELTFEEKKVKERNFACGEIQTRKRFGYGTYEARIKAADGSGLNSAFFTYIGPADKKPHDEIDFEVLGKNTAKVQINQYVSAKGGNEFLADVPGGANQGFNDYAFVWEKNRIRYYVNGELVHEVTDPAKIPVNAQKIFFSLWGTDTLTDWMGTFSYKEPTKLQVDRVAFTAAGDECQFAESVACQLERAQSE.

The signal sequence occupies residues 1–29; that stretch reads MTIDRYRRFARLAFIATLPLAGLATAAAA. Residues 40 to 252 form the GH16 domain; sequence DDFDTLDTRV…RVAFTAAGDE (213 aa). E138 (nucleophile) is an active-site residue. The active-site Proton donor is the E142.

Belongs to the glycosyl hydrolase 16 family.

Its subcellular location is the secreted. It participates in glycan metabolism; exopolysaccharide biosynthesis. Functionally, cleaves high molecular weight succinoglycan to yield LMW succinoglycan. Dynamically regulates the molecular weight distribution of succinoglycan by cleaving nascent succinoglycan only during a limited period after its synthesis, perhaps before it undergoes a time-dependent change in its conformation or aggregation state. In Rhizobium meliloti (strain 1021) (Ensifer meliloti), this protein is Endo-1,3-1,4-beta-glycanase ExoK (exoK).